Reading from the N-terminus, the 295-residue chain is Small ribosomal subunit protein uS2 (295 aa).

An N-acetylserine modification is found at S2. S43 is subject to Phosphoserine. The residue at position 52 (K52) is an N6-acetyllysine. Residues 54–113 (TWEKLLLAARAIVAIENPADVSVISSRNTGQRAVLKFAAATGATPIAGRFTPGTFTNQIQ) are interaction with PPP1R16B. Position 89 is an N6-acetyllysine; alternate (K89). K89 is covalently cross-linked (Glycyl lysine isopeptide (Lys-Gly) (interchain with G-Cter in SUMO2); alternate). T97 carries the phosphothreonine modification. Laminin-binding stretches follow at residues 161–180 (IPCN…MLAR) and 205–229 (RDPE…EFQG). [DE]-W-[ST] repeat units follow at residues 230-232 (EWT), 247-249 (DWS), 266-268 (DWS), 275-277 (DWS), and 293-295 (EWS). The tract at residues 242–295 (QPEVADWSEGVQVPSVPIQQFPTEDWSAQPTTEDWSAAPTAQATEWVGTTTEWS) is laminin-binding. The segment at 266–295 (DWSAQPTTEDWSAAPTAQATEWVGTTTEWS) is disordered.

Belongs to the universal ribosomal protein uS2 family. In terms of assembly, monomer (37LRP) and homodimer (67LR). Component of the small ribosomal subunit. Mature ribosomes consist of a small (40S) and a large (60S) subunit. The 40S subunit contains about 33 different proteins and 1 molecule of RNA (18S). The 60S subunit contains about 49 different proteins and 3 molecules of RNA (28S, 5.8S and 5S). Interacts with RPS21. Interacts with several laminins including at least LAMB1. Interacts with MDK. The mature dimeric form interacts with PPP1R16B (via its fourth ankyrin repeat). Interacts with PPP1CA only in the presence of PPP1R16B. In terms of processing, acylated. Acylation may be a prerequisite for conversion of the monomeric 37 kDa laminin receptor precursor (37LRP) to the mature dimeric 67 kDa laminin receptor (67LR), and may provide a mechanism for membrane association. Post-translationally, cleaved by stromelysin-3 (ST3) at the cell surface. Cleavage by stromelysin-3 may be a mechanism to alter cell-extracellular matrix interactions.

It localises to the cell membrane. It is found in the cytoplasm. Its subcellular location is the nucleus. Its function is as follows. Required for the assembly and/or stability of the 40S ribosomal subunit. Required for the processing of the 20S rRNA-precursor to mature 18S rRNA in a late step of the maturation of 40S ribosomal subunits. Also functions as a cell surface receptor for laminin. Plays a role in cell adhesion to the basement membrane and in the consequent activation of signaling transduction pathways. May play a role in cell fate determination and tissue morphogenesis. Also acts as a receptor for several other ligands, including the pathogenic prion protein, viruses, and bacteria. Acts as a PPP1R16B-dependent substrate of PPP1CA. This is Small ribosomal subunit protein uS2 from Sus scrofa (Pig).